We begin with the raw amino-acid sequence, 643 residues long: Protein cueball (643 aa).

Residues 1-21 (MMIWVPALIFLSACLLPRSNG) form the signal peptide. Residues 22 to 530 (TPLEWDFAVT…VCQTPFVWTS (509 aa)) lie on the Extracellular side of the membrane. Asparagine 77 and asparagine 103 each carry an N-linked (GlcNAc...) asparagine glycan. LDL-receptor class B repeat units lie at residues 116-163 (RNLF…DICR), 164-208 (RKLY…DQLS), and 209-254 (DRLF…TNDA). N-linked (GlcNAc...) asparagine glycosylation is present at asparagine 172. Residues 276–290 (ATTTVRPEVESSTDG) show a composition bias toward polar residues. Residues 276 to 303 (ATTTVRPEVESSTDGTESESKQESEPVE) form a disordered region. Residue asparagine 312 is glycosylated (N-linked (GlcNAc...) asparagine). EGF-like domains follow at residues 363 to 397 (RMDQLERDHCMNGGSYISKRDLCICPAGFKGSRCE), 398 to 429 (IRECHNYCVHGTCQMSDLAYPKCYCQPGFTGE), and 432 to 470 (EVSNCAGLCLNGGHCRLGETEKDQPSCECPANFAGERCE). 7 cysteine pairs are disulfide-bonded: cysteine 372-cysteine 385, cysteine 387-cysteine 396, cysteine 401-cysteine 410, cysteine 405-cysteine 420, cysteine 436-cysteine 446, cysteine 440-cysteine 458, and cysteine 460-cysteine 469. 2 N-linked (GlcNAc...) asparagine glycosylation sites follow: asparagine 472 and asparagine 507. A helical transmembrane segment spans residues 531-551 (SVIIILVVGIVFSLLLITTII). Residues 552–643 (HGIRRLYKPK…LIHNMEDDLY (92 aa)) lie on the Cytoplasmic side of the membrane.

The protein belongs to the cueball family.

Its subcellular location is the cell membrane. Functionally, has a role in spermatogenesis and oogenesis. The protein is Protein cueball of Drosophila ananassae (Fruit fly).